Here is a 343-residue protein sequence, read N- to C-terminus: Zinc finger protein Gfi-1b (343 aa).

The interval 1–20 (MPRSFLVKSKKTHTYNQHRY) is mediates repression of transcription. The interval 1–20 (MPRSFLVKSKKTHTYNQHRY) is SNAG domain. Residues 51–77 (STDPTEKQHTPENVITEEARSDPGDPR) are disordered. Basic and acidic residues predominate over residues 67 to 77 (EEARSDPGDPR). 6 consecutive C2H2-type zinc fingers follow at residues 176 to 199 (YHCV…RRSH), 205 to 227 (FVCN…LNVH), 233 to 255 (FECK…LLIH), 261 to 283 (YPCQ…TYIH), 289 to 311 (HKCQ…SRKH), and 317 to 340 (FSCD…ENQH).

It is found in the nucleus. Essential transcriptional regulator necessary for development and differentiation of erythroid and megakaryocytic lineages. Alters histone methylation by recruiting histone methyltransferase to target genes promoters. Plays a role in heterochromatin formation. This chain is Zinc finger protein Gfi-1b (gfi1b), found in Xenopus laevis (African clawed frog).